A 306-amino-acid chain; its full sequence is HORMA domain-containing protein 2 (306 aa).

Residues 29–232 (HESLIMVKKL…TGFHSMKVKV (204 aa)) enclose the HORMA domain.

In terms of assembly, interacts with HORMAD1. Post-translationally, phosphorylated in a SPO11-dependent manner.

It is found in the nucleus. The protein localises to the chromosome. In terms of biological role, essential for synapsis surveillance during meiotic prophase via the recruitment of ATR activity. Plays a key role in the male mid-pachytene checkpoint and the female meiotic prophase checkpoint: required for efficient build-up of ATR activity on unsynapsed chromosome regions, a process believed to form the basis of meiotic silencing of unsynapsed chromatin (MSUC) and meiotic prophase quality control in both sexes. Required for the DNA double-strand break-independent, BRCA1-dependent activation of ATR on the sex chromosomes that is essential for normal sex body formation. The chain is HORMA domain-containing protein 2 (HORMAD2) from Bos taurus (Bovine).